Consider the following 110-residue polypeptide: Large ribosomal subunit protein uL22 (110 aa).

The protein belongs to the universal ribosomal protein uL22 family. As to quaternary structure, part of the 50S ribosomal subunit.

In terms of biological role, this protein binds specifically to 23S rRNA; its binding is stimulated by other ribosomal proteins, e.g. L4, L17, and L20. It is important during the early stages of 50S assembly. It makes multiple contacts with different domains of the 23S rRNA in the assembled 50S subunit and ribosome. Its function is as follows. The globular domain of the protein is located near the polypeptide exit tunnel on the outside of the subunit, while an extended beta-hairpin is found that lines the wall of the exit tunnel in the center of the 70S ribosome. This chain is Large ribosomal subunit protein uL22, found in Klebsiella pneumoniae (strain 342).